The chain runs to 303 residues: N-acetyl-D-glucosamine kinase (303 aa).

ATP is bound by residues 4 to 11 (GFDIGGTK) and 133 to 140 (GVGGGLIF). Positions 157, 177, 179, and 184 each coordinate Zn(2+).

It belongs to the ROK (NagC/XylR) family. NagK subfamily.

The catalysed reaction is N-acetyl-D-glucosamine + ATP = N-acetyl-D-glucosamine 6-phosphate + ADP + H(+). It participates in cell wall biogenesis; peptidoglycan recycling. Its function is as follows. Catalyzes the phosphorylation of N-acetyl-D-glucosamine (GlcNAc) derived from cell-wall degradation, yielding GlcNAc-6-P. This Escherichia coli (strain K12 / DH10B) protein is N-acetyl-D-glucosamine kinase.